We begin with the raw amino-acid sequence, 542 residues long: Multidrug transporter DTR1 (542 aa).

N-linked (GlcNAc...) asparagine glycosylation is found at asparagine 6 and asparagine 46. Residues 80 to 100 traverse the membrane as a helical segment; it reads LIFLIVIYNGFLGPLAGNVFI. Residues asparagine 111 and asparagine 118 are each glycosylated (N-linked (GlcNAc...) asparagine). Helical transmembrane passes span 119–139, 146–166, 169–189, 210–230, and 237–257; these read ATVS…GALA, ILYI…ASVP, IGSL…VISL, FMLG…LILL, and WLFG…ILLL. Residue asparagine 274 is glycosylated (N-linked (GlcNAc...) asparagine). 4 helical membrane-spanning segments follow: residues 332–352, 374–394, 419–439, and 441–461; these read IMTF…FCTY, IGAC…IGGH, ILTV…GWCI, and FHYH…GLTW. The N-linked (GlcNAc...) asparagine glycan is linked to asparagine 463. 2 helical membrane passes run 481–501 and 511–531; these read AIAV…ALIA and FCFL…LVLI.

Belongs to the major facilitator superfamily. CAR1 family.

It is found in the cell membrane. Its function is as follows. Plasma membrane acetic acid exporter, relieving the stress induced upon cells within hemocytes, and thus enabling increased proliferation and virulence against Galleria mellonella larvae. Confers resistance to weak acid and oxidative stress, but not to antifungal drugs. This Candida glabrata (strain ATCC 2001 / BCRC 20586 / JCM 3761 / NBRC 0622 / NRRL Y-65 / CBS 138) (Yeast) protein is Multidrug transporter DTR1.